Consider the following 319-residue polypeptide: ATP-dependent 6-phosphofructokinase (319 aa).

Position 11 (Gly11) interacts with ATP. Position 21-25 (21-25) interacts with ADP; the sequence is RAVVR. Residues 72–73 and 102–105 contribute to the ATP site; these read RC and GDGS. Residue Asp103 participates in Mg(2+) binding. Residue 125–127 coordinates substrate; that stretch reads TID. Asp127 serves as the catalytic Proton acceptor. Arg154 is a binding site for ADP. Residues Arg162 and 169–171 contribute to the substrate site; that span reads MGR. Residues 185–187, Arg211, and 213–215 contribute to the ADP site; these read GAE and KKH. Substrate-binding positions include Glu222, Arg243, and 249-252; that span reads HIQR.

It belongs to the phosphofructokinase type A (PFKA) family. ATP-dependent PFK group I subfamily. Prokaryotic clade 'B1' sub-subfamily. As to quaternary structure, homotetramer. Requires Mg(2+) as cofactor.

Its subcellular location is the cytoplasm. The catalysed reaction is beta-D-fructose 6-phosphate + ATP = beta-D-fructose 1,6-bisphosphate + ADP + H(+). Its pathway is carbohydrate degradation; glycolysis; D-glyceraldehyde 3-phosphate and glycerone phosphate from D-glucose: step 3/4. With respect to regulation, allosterically activated by ADP and other diphosphonucleosides, and allosterically inhibited by phosphoenolpyruvate. Functionally, catalyzes the phosphorylation of D-fructose 6-phosphate to fructose 1,6-bisphosphate by ATP, the first committing step of glycolysis. The polypeptide is ATP-dependent 6-phosphofructokinase (Shouchella clausii (strain KSM-K16) (Alkalihalobacillus clausii)).